The following is a 521-amino-acid chain: Maturase K (521 aa).

It belongs to the intron maturase 2 family. MatK subfamily.

It localises to the plastid. The protein resides in the chloroplast. Usually encoded in the trnK tRNA gene intron. Probably assists in splicing its own and other chloroplast group II introns. The polypeptide is Maturase K (Anthericum liliago (St-Bernard's lily)).